The sequence spans 56 residues: MAKEKATLPPTGAGLMRFFDEDTKAVKISPRGVIALTLILVALEILLHAFGPQIFG.

Over 1–29 (MAKEKATLPPTGAGLMRFFDEDTKAVKIS) the chain is Cytoplasmic. The chain crosses the membrane as a helical span at residues 30 to 51 (PRGVIALTLILVALEILLHAFG). Over 52–56 (PQIFG) the chain is Extracellular.

It belongs to the SEC61-beta family. Component of the protein translocase complex. Heterotrimer consisting of alpha (SecY), beta (SecG) and gamma (SecE) subunits. Can form oligomers of the heterotrimer.

The protein resides in the cell membrane. In terms of biological role, involved in protein export. The function of the beta subunit is unknown, but it may be involved in stabilization of the trimeric complex. The polypeptide is Preprotein translocase subunit SecG (Thermococcus onnurineus (strain NA1)).